Here is a 153-residue protein sequence, read N- to C-terminus: D-aminoacyl-tRNA deacylase (153 aa).

Residues 142–143 (GP) carry the Gly-cisPro motif, important for rejection of L-amino acids motif.

It belongs to the DTD family. Homodimer.

The protein resides in the cytoplasm. It carries out the reaction glycyl-tRNA(Ala) + H2O = tRNA(Ala) + glycine + H(+). The enzyme catalyses a D-aminoacyl-tRNA + H2O = a tRNA + a D-alpha-amino acid + H(+). Its function is as follows. An aminoacyl-tRNA editing enzyme that deacylates mischarged D-aminoacyl-tRNAs. Also deacylates mischarged glycyl-tRNA(Ala), protecting cells against glycine mischarging by AlaRS. Acts via tRNA-based rather than protein-based catalysis; rejects L-amino acids rather than detecting D-amino acids in the active site. By recycling D-aminoacyl-tRNA to D-amino acids and free tRNA molecules, this enzyme counteracts the toxicity associated with the formation of D-aminoacyl-tRNA entities in vivo and helps enforce protein L-homochirality. This Cupriavidus taiwanensis (strain DSM 17343 / BCRC 17206 / CCUG 44338 / CIP 107171 / LMG 19424 / R1) (Ralstonia taiwanensis (strain LMG 19424)) protein is D-aminoacyl-tRNA deacylase.